A 156-amino-acid chain; its full sequence is Terrestric acid biosynthesis cluster protein E (156 aa).

Its pathway is secondary metabolite biosynthesis. Its function is as follows. Part of the tra gene cluster that produces terrestric acid. The clavatol biosynthesis cluster cla and the terrestric acid cluster tra are both involved in the production of peniphenones and penilactones. The non-reducing PKS claF is responsible for the formation of clavatol from successive condensations of 3 malonyl-CoA units, presumably with a simple acetyl-CoA starter unit, and 2 methylation steps. The esterase claE probably collaborates with claF by catalyzing the hydrolysis of ACP-bound acyl intermediates to free the ACP from stalled intermediates. The clavatol oxidase claD then converts clavatol to hydroxyclavatol. Spontaneous dehydration of hydroxyclavatol leads to the accumulation of the highly active ortho-quinone methide. On the other hand, the PKS-NRPS hybrid traA is involved in the formation of crustosic acid, with the help of traB and traD. The polyketide synthase module (PKS) of traA is responsible for the synthesis of the polyketide backbone via the condensation of an acetyl-CoA starter unit with 3 malonyl-CoA units. The downstream nonribosomal peptide synthetase (NRPS) module then amidates the carboxyl end of the polyketide with L-malic acid. Because traA lacks a designated enoylreductase (ER) domain, the required activity is provided the enoyl reductase traG. Crustosic acid undergoes decarboxylation and isomerization to the terrestric acid, catalyzed by the 2-oxoglutarate-dependent dioxygenase traH. Both acids are further converted to the 2 gamma-butyrolactones (R)-5-methyltetronic acid and (S)-5-carboxylmethyltetronic acid, with involvement of the cytochrome P450 monooxygenase claJ. Spontaneous addition of the methide to these gamma-butyrolactones leads to peniphenone D and penilactone D, which undergo again stereospecific attacking by methide to give penilactones A and B. TraE seems not to be involved in the biosynthesis of peniphenones and penilactones in the conditions used to study its function. The polypeptide is Terrestric acid biosynthesis cluster protein E (Penicillium crustosum (Blue mold fungus)).